The chain runs to 267 residues: Small ribosomal subunit protein uS2 (267 aa).

A disordered region spans residues 225–267 (LREQELEGEEQEEAAPATEEEKKELIEEAVAEGEAEETEEEEK). The span at 251–267 (EEAVAEGEAEETEEEEK) shows a compositional bias: acidic residues.

This sequence belongs to the universal ribosomal protein uS2 family.

In Nitratiruptor sp. (strain SB155-2), this protein is Small ribosomal subunit protein uS2.